Reading from the N-terminus, the 256-residue chain is Thiazole synthase (256 aa).

Lysine 96 serves as the catalytic Schiff-base intermediate with DXP. 1-deoxy-D-xylulose 5-phosphate-binding positions include glycine 157, 184 to 185, and 206 to 207; these read AG and NT.

Belongs to the ThiG family. In terms of assembly, homotetramer. Forms heterodimers with either ThiH or ThiS.

The protein resides in the cytoplasm. The enzyme catalyses [ThiS sulfur-carrier protein]-C-terminal-Gly-aminoethanethioate + 2-iminoacetate + 1-deoxy-D-xylulose 5-phosphate = [ThiS sulfur-carrier protein]-C-terminal Gly-Gly + 2-[(2R,5Z)-2-carboxy-4-methylthiazol-5(2H)-ylidene]ethyl phosphate + 2 H2O + H(+). It participates in cofactor biosynthesis; thiamine diphosphate biosynthesis. In terms of biological role, catalyzes the rearrangement of 1-deoxy-D-xylulose 5-phosphate (DXP) to produce the thiazole phosphate moiety of thiamine. Sulfur is provided by the thiocarboxylate moiety of the carrier protein ThiS. In vitro, sulfur can be provided by H(2)S. This Brucella canis (strain ATCC 23365 / NCTC 10854 / RM-666) protein is Thiazole synthase.